A 453-amino-acid chain; its full sequence is Homogentisate 1,2-dioxygenase (453 aa).

The active-site Proton acceptor is His306. Residues His349 and Glu355 each contribute to the Fe cation site. Positions 364 and 385 each coordinate homogentisate. A Fe cation-binding site is contributed by His385.

Belongs to the homogentisate dioxygenase family. Hexamer; dimer of trimers. Requires Fe cation as cofactor.

It catalyses the reaction homogentisate + O2 = 4-maleylacetoacetate + H(+). Its pathway is amino-acid degradation; L-phenylalanine degradation; acetoacetate and fumarate from L-phenylalanine: step 4/6. Functionally, involved in the catabolism of homogentisate (2,5-dihydroxyphenylacetate or 2,5-OH-PhAc), a central intermediate in the degradation of phenylalanine and tyrosine. Catalyzes the oxidative ring cleavage of the aromatic ring of homogentisate to yield maleylacetoacetate. The polypeptide is Homogentisate 1,2-dioxygenase (Rhizobium leguminosarum bv. trifolii (strain WSM2304)).